The following is a 366-amino-acid chain: Polyprenyl transferase ausN (366 aa).

Helical transmembrane passes span 97–117 (VVGI…DLLL), 121–141 (LLLT…NDLI), 164–184 (LPTA…LFLF), 215–235 (LILV…GVEP), 239–259 (ILSS…IDLV), 287–307 (LAYS…LLGG), 308–328 (LRAP…WTFL), and 346–366 (SCLM…AVRV).

This sequence belongs to the UbiA prenyltransferase family. The cofactor is Mg(2+).

Its subcellular location is the membrane. It catalyses the reaction 3,5-dimethylorsellinate + (2E,6E)-farnesyl diphosphate = (3R)-3-farnesyl-6-hydroxy-2,3,5-trimethyl-4-oxocyclohexa-1,5-diene-1-carboxylate + diphosphate + H(+). It functions in the pathway secondary metabolite biosynthesis; terpenoid biosynthesis. Polyprenyl transferase; part of the gene cluster that mediates the biosynthesis of calidodehydroaustin, a fungal meroterpenoid. The first step of the pathway is the synthesis of 3,5-dimethylorsellinic acid by the polyketide synthase ausA. 3,5-dimethylorsellinic acid is then prenylated by the polyprenyl transferase ausN. Further epoxidation by the FAD-dependent monooxygenase ausM and cyclization by the probable terpene cyclase ausL lead to the formation of protoaustinoid A. Protoaustinoid A is then oxidized to spiro-lactone preaustinoid A3 by the combined action of the FAD-binding monooxygenases ausB and ausC, and the dioxygenase ausE. Acid-catalyzed keto-rearrangement and ring contraction of the tetraketide portion of preaustinoid A3 by ausJ lead to the formation of preaustinoid A4. The aldo-keto reductase ausK, with the help of ausH, is involved in the next step by transforming preaustinoid A4 into isoaustinone which is in turn hydroxylated by the P450 monooxygenase ausI to form austinolide. The cytochrome P450 monooxygenase ausG modifies austinolide to austinol. Austinol is further acetylated to austin by the O-acetyltransferase ausP, which spontaneously changes to dehydroaustin. The cytochrome P450 monooxygenase ausR then converts dehydroaustin is into 7-dehydrodehydroaustin. The hydroxylation catalyzed by ausR permits the O-acetyltransferase ausQ to add an additional acetyl group to the molecule, leading to the formation of acetoxydehydroaustin. The short chain dehydrogenase ausT catalyzes the reduction of the double bond present between carbon atoms 1 and 2 to convert 7-dehydrodehydroaustin into 1,2-dihydro-7-hydroxydehydroaustin. AusQ catalyzes not only an acetylation reaction but also the addition of the PKS ausV diketide product to 1,2-dihydro-7-hydroxydehydroaustin, forming precalidodehydroaustin. Finally, the iron/alpha-ketoglutarate-dependent dioxygenase converts precalidodehydroaustin into calidodehydroaustin. The sequence is that of Polyprenyl transferase ausN from Aspergillus calidoustus.